The sequence spans 280 residues: 4-diphosphocytidyl-2-C-methyl-D-erythritol kinase (280 aa).

K9 is a catalytic residue. Position 92-102 (92-102 (PMGGGLGGGSS)) interacts with ATP. Residue D134 is part of the active site.

Belongs to the GHMP kinase family. IspE subfamily.

It carries out the reaction 4-CDP-2-C-methyl-D-erythritol + ATP = 4-CDP-2-C-methyl-D-erythritol 2-phosphate + ADP + H(+). It functions in the pathway isoprenoid biosynthesis; isopentenyl diphosphate biosynthesis via DXP pathway; isopentenyl diphosphate from 1-deoxy-D-xylulose 5-phosphate: step 3/6. In terms of biological role, catalyzes the phosphorylation of the position 2 hydroxy group of 4-diphosphocytidyl-2C-methyl-D-erythritol. The polypeptide is 4-diphosphocytidyl-2-C-methyl-D-erythritol kinase (Nitrosococcus oceani (strain ATCC 19707 / BCRC 17464 / JCM 30415 / NCIMB 11848 / C-107)).